The following is a 466-amino-acid chain: Fumarate hydratase class II (466 aa).

Residues 100–102, arginine 128, 131–134, 141–143, and threonine 189 each bind substrate; these read SGT, HPND, and STN. Histidine 190 (proton donor/acceptor) is an active-site residue. Residue serine 320 is part of the active site. Residues serine 321 and 326-328 each bind substrate; that span reads KVN.

This sequence belongs to the class-II fumarase/aspartase family. Fumarase subfamily. As to quaternary structure, homotetramer.

The protein localises to the cytoplasm. It catalyses the reaction (S)-malate = fumarate + H2O. The protein operates within carbohydrate metabolism; tricarboxylic acid cycle; (S)-malate from fumarate: step 1/1. Its function is as follows. Involved in the TCA cycle. Catalyzes the stereospecific interconversion of fumarate to L-malate. The protein is Fumarate hydratase class II of Prochlorococcus marinus (strain MIT 9313).